Consider the following 173-residue polypeptide: Glutamyl-tRNA(Gln) amidotransferase subunit F, mitochondrial (173 aa).

The N-terminal 15 residues, 1-15 (MSRFMIRAVFFRRYT), are a transit peptide targeting the mitochondrion.

Belongs to the GatF family. Subunit of the heterotrimeric GatFAB amidotransferase (AdT) complex, composed of A, B and F subunits.

Its subcellular location is the mitochondrion inner membrane. The catalysed reaction is L-glutamyl-tRNA(Gln) + L-glutamine + ATP + H2O = L-glutaminyl-tRNA(Gln) + L-glutamate + ADP + phosphate + H(+). Allows the formation of correctly charged Gln-tRNA(Gln) through the transamidation of misacylated Glu-tRNA(Gln) in the mitochondria. The reaction takes place in the presence of glutamine and ATP through an activated gamma-phospho-Glu-tRNA(Gln). Required for proper protein synthesis within the mitochondrion. This Candida glabrata (strain ATCC 2001 / BCRC 20586 / JCM 3761 / NBRC 0622 / NRRL Y-65 / CBS 138) (Yeast) protein is Glutamyl-tRNA(Gln) amidotransferase subunit F, mitochondrial.